Consider the following 132-residue polypeptide: Small ribosomal subunit protein uS8 (132 aa).

Belongs to the universal ribosomal protein uS8 family. In terms of assembly, part of the 30S ribosomal subunit. Contacts proteins S5 and S12.

One of the primary rRNA binding proteins, it binds directly to 16S rRNA central domain where it helps coordinate assembly of the platform of the 30S subunit. This Alkaliphilus metalliredigens (strain QYMF) protein is Small ribosomal subunit protein uS8.